Here is a 314-residue protein sequence, read N- to C-terminus: GTP-binding protein gtr2 (314 aa).

Positions 17, 18, 37, 118, and 121 each coordinate GTP.

Belongs to the GTR/RAG GTP-binding protein family.

Its subcellular location is the vacuole membrane. It localises to the cytoplasm. The protein resides in the nucleus. It carries out the reaction GTP + H2O = GDP + phosphate + H(+). Functionally, GTPase involved in activation of the TORC1 signaling pathway, which promotes growth and represses autophagy in nutrient-rich conditions. Also required for TORC1 inactivation during nitrogen starvation. This Schizosaccharomyces pombe (strain 972 / ATCC 24843) (Fission yeast) protein is GTP-binding protein gtr2 (gtr2).